The sequence spans 316 residues: MTKEFHHVTVLLHETVDMLDIKPNGIYVDATLGGSGHSAYLLSKLSEQGHLYCFDQDQKAIDNAQVTLKSYIDKGQVTFIKDNFRHLKARLTALGVDEIDGILYDLGVSSPQLDERERGFSYNQDAPLDMRMDRQAPLTAYDVVNTYPFNDLVKIFFKYGEDKFSKQIARKIEQARAIKPIETTTELAELIKAAKPAKELKKKGHPAKQIFQAIRIEVNDELGAADESIQDAMELLALDGRISVITFHSLEDRLTKQLFKEASTVDVPKGLPFIPEDMKPTFELVSRKPILPSQEELAANNRAHSAKLRVAKKIRK.

S-adenosyl-L-methionine-binding positions include 35–37, aspartate 55, phenylalanine 84, aspartate 105, and glutamine 112; that span reads SGH.

It belongs to the methyltransferase superfamily. RsmH family.

It localises to the cytoplasm. It carries out the reaction cytidine(1402) in 16S rRNA + S-adenosyl-L-methionine = N(4)-methylcytidine(1402) in 16S rRNA + S-adenosyl-L-homocysteine + H(+). In terms of biological role, specifically methylates the N4 position of cytidine in position 1402 (C1402) of 16S rRNA. The sequence is that of Ribosomal RNA small subunit methyltransferase H from Streptococcus dysgalactiae subsp. equisimilis (strain GGS_124).